Here is a 341-residue protein sequence, read N- to C-terminus: tRNA N6-adenosine threonylcarbamoyltransferase (341 aa).

Positions 119 and 123 each coordinate Fe cation. Substrate-binding positions include 141–145 (MVSGG), Asp-174, Gly-187, and Asn-279. Asp-307 lines the Fe cation pocket.

Belongs to the KAE1 / TsaD family. The cofactor is Fe(2+).

It is found in the cytoplasm. It carries out the reaction L-threonylcarbamoyladenylate + adenosine(37) in tRNA = N(6)-L-threonylcarbamoyladenosine(37) in tRNA + AMP + H(+). In terms of biological role, required for the formation of a threonylcarbamoyl group on adenosine at position 37 (t(6)A37) in tRNAs that read codons beginning with adenine. Is involved in the transfer of the threonylcarbamoyl moiety of threonylcarbamoyl-AMP (TC-AMP) to the N6 group of A37, together with TsaE and TsaB. TsaD likely plays a direct catalytic role in this reaction. In Oenococcus oeni (strain ATCC BAA-331 / PSU-1), this protein is tRNA N6-adenosine threonylcarbamoyltransferase.